A 308-amino-acid chain; its full sequence is Elongation factor Ts (308 aa).

The interval 80–83 (TDFV) is involved in Mg(2+) ion dislocation from EF-Tu.

This sequence belongs to the EF-Ts family.

Its subcellular location is the cytoplasm. Functionally, associates with the EF-Tu.GDP complex and induces the exchange of GDP to GTP. It remains bound to the aminoacyl-tRNA.EF-Tu.GTP complex up to the GTP hydrolysis stage on the ribosome. The polypeptide is Elongation factor Ts (Agrobacterium fabrum (strain C58 / ATCC 33970) (Agrobacterium tumefaciens (strain C58))).